The following is a 67-amino-acid chain: Metallothionein-B (67 aa).

It belongs to the metallothionein superfamily. Type 4 family.

Functionally, metallothioneins have a high content of cysteine residues that bind various heavy metals. This Sphaerechinus granularis (Purple sea urchin) protein is Metallothionein-B.